Consider the following 146-residue polypeptide: uncharacterized protein (146 aa).

The HTH marR-type domain occupies 9–141 (VADIEKSLRH…FEKSLMKLQH (133 aa)). Residues 55 to 78 (IGELSGKMYLACSTTTDLIDRMQK) constitute a DNA-binding region (H-T-H motif).

This is an uncharacterized protein from Bacillus subtilis (strain 168).